We begin with the raw amino-acid sequence, 181 residues long: Regulator of G-protein signaling 10 (181 aa).

The tract at residues 1-35 (MFTRAVSRLSRKRPPSDIHDGDGSSSSGHQSLKST) is disordered. Phosphoserine is present on residues serine 24 and serine 41. In terms of domain architecture, RGS spans 41–156 (SLENLLEDPE…LKSDLFLKPK (116 aa)). A lipid anchor (S-palmitoyl cysteine) is attached at cysteine 74. The tract at residues 155-181 (PKRTEEEEEEPPDAQTAAKRASRIYNT) is disordered. Position 176 is a phosphoserine (serine 176).

Interacts with GNAZ, GNAI1 and GNAI3. Associates specifically with the activated, GTP-bound forms of GNAZ and GNAI3.

It localises to the cytoplasm. The protein localises to the cytosol. The protein resides in the nucleus. In terms of biological role, regulates G protein-coupled receptor signaling cascades, including signaling downstream of the muscarinic acetylcholine receptor CHRM2. Inhibits signal transduction by increasing the GTPase activity of G protein alpha subunits, thereby driving them into their inactive GDP-bound form. Modulates the activity of potassium channels that are activated in response to CHRM2 signaling. Activity on GNAZ is inhibited by palmitoylation of the G-protein. The sequence is that of Regulator of G-protein signaling 10 (Rgs10) from Mus musculus (Mouse).